We begin with the raw amino-acid sequence, 383 residues long: Succinyl-diaminopimelate desuccinylase (383 aa).

Residue His79 participates in Zn(2+) binding. Asp81 is an active-site residue. Asp110 provides a ligand contact to Zn(2+). Catalysis depends on Glu141, which acts as the Proton acceptor. Zn(2+) is bound by residues Glu142, Glu170, and His355.

The protein belongs to the peptidase M20A family. DapE subfamily. In terms of assembly, homodimer. Zn(2+) is required as a cofactor. Requires Co(2+) as cofactor.

It catalyses the reaction N-succinyl-(2S,6S)-2,6-diaminopimelate + H2O = (2S,6S)-2,6-diaminopimelate + succinate. The protein operates within amino-acid biosynthesis; L-lysine biosynthesis via DAP pathway; LL-2,6-diaminopimelate from (S)-tetrahydrodipicolinate (succinylase route): step 3/3. Functionally, catalyzes the hydrolysis of N-succinyl-L,L-diaminopimelic acid (SDAP), forming succinate and LL-2,6-diaminopimelate (DAP), an intermediate involved in the bacterial biosynthesis of lysine and meso-diaminopimelic acid, an essential component of bacterial cell walls. The sequence is that of Succinyl-diaminopimelate desuccinylase from Helicobacter pylori (strain Shi470).